The sequence spans 389 residues: SH2 domain-containing protein 2A (389 aa).

The interval 41 to 63 (AASPQAPEAASNTGNAERAEEVP) is disordered. Positions 95–186 (WFHGFITRRE…PYGETLTEPL (92 aa)) constitute an SH2 domain. Residues 190 to 295 (TPEPAGLSLR…PIAFYAMGRG (106 aa)) form a disordered region. Polar residues predominate over residues 203–216 (SNFGSKSQDPNPQY). Ser-217 carries the phosphoserine modification. 2 consecutive short sequence motifs (SH3-binding) follow at residues 244 to 250 (RPKPPIP) and 272 to 278 (RPKPSNP). Residues 245-256 (PKPPIPAKPQLP) are compositionally biased toward pro residues. Ser-296 is modified (phosphoserine). The disordered stretch occupies residues 324 to 389 (KSWSRPVPGG…QAWLPLGPPQ (66 aa)). Residues 337–348 (GGSQLHSENSVI) are compositionally biased toward polar residues. Residues 352-361 (PPLPHQPPPA) are compositionally biased toward pro residues.

In terms of assembly, interacts with KDR. Interacts with TXK and ITK. Phosphorylated on tyrosine residues. As to expression, expression limited to tissues of the immune system and, in particular, activated T-cells. Expressed in peripheral blood leukocytes, thymus and spleen. Much lower expression or undetectable, in brain, placenta, skeletal muscle, prostate, testis, ovary, small intestine, and colon. Expressed at low levels in unstimulated T-cells, but not expressed in normal resting or activated B-cells. According to PubMed:10692392, expression is not restricted to activated T-cells, but strongly expressed in blood cell lineages, the endothelium and other cell and tissue types, such as heart, lung, and liver.

The protein resides in the cytoplasm. Could be a T-cell-specific adapter protein involved in the control of T-cell activation. May play a role in the CD4-p56-LCK-dependent signal transduction pathway. Could also play an important role in normal and pathological angiogenesis. Could be an adapter protein that facilitates and regulates interaction of KDR with effector proteins important to endothelial cell survival and proliferation. The protein is SH2 domain-containing protein 2A (SH2D2A) of Homo sapiens (Human).